A 465-amino-acid chain; its full sequence is Argininosuccinate lyase (465 aa).

Belongs to the lyase 1 family. Argininosuccinate lyase subfamily.

It localises to the cytoplasm. It catalyses the reaction 2-(N(omega)-L-arginino)succinate = fumarate + L-arginine. It participates in amino-acid biosynthesis; L-arginine biosynthesis; L-arginine from L-ornithine and carbamoyl phosphate: step 3/3. The polypeptide is Argininosuccinate lyase (Hyphomonas neptunium (strain ATCC 15444)).